Consider the following 207-residue polypeptide: Gene 66 protein (207 aa).

The polypeptide is Gene 66 protein (66) (Mycobacterium (Mycobacteriophage L5)).